The sequence spans 397 residues: Dual oxidase maturation factor 1 (397 aa).

2 helical membrane-spanning segments follow: residues 26 to 46 and 57 to 77; these read FVIF…LPGV and YVLM…PCWA. A glycan (N-linked (GlcNAc...) asparagine) is linked at Asn-109. 3 helical membrane passes run 191–211, 218–238, and 261–281; these read AAIW…LFLP, ILAT…LSPC, and CFYL…GLGI. The segment at 324–376 is disordered; sequence YGTNTTNSSRDKNDISSDKTAGSSGFQSRTSTCQSSASSASLRSQSSIETVHD. Residues Asn-327 and Asn-330 are each glycosylated (N-linked (GlcNAc...) asparagine). Positions 341-350 are enriched in polar residues; the sequence is DKTAGSSGFQ. The span at 351–370 shows a compositional bias: low complexity; sequence SRTSTCQSSASSASLRSQSS.

The protein belongs to the DUOXA family. In terms of assembly, interacts with bli-3 and tsp-15. Interacts with csnk-1. Expressed in the hypodermis, specifically in seam cells, the terminal bulb of the pharynx, the distal region of the gonadal arm, vulva, spermatheca and uterus.

It is found in the membrane. Functionally, plays a role in cuticle biogenesis. In complex with tsp-15 and the dual oxidase bli-3, promotes the generation of reactive oxygen species (ROS) and tyrosine cross-linking of collagen, thus stabilizing cuticular extracellular matrix. This is Dual oxidase maturation factor 1 from Caenorhabditis elegans.